The primary structure comprises 328 residues: tRNA uridine(34) hydroxylase (328 aa).

Positions L130–E224 constitute a Rhodanese domain. The active-site Cysteine persulfide intermediate is C184.

It belongs to the TrhO family.

It catalyses the reaction uridine(34) in tRNA + AH2 + O2 = 5-hydroxyuridine(34) in tRNA + A + H2O. Its function is as follows. Catalyzes oxygen-dependent 5-hydroxyuridine (ho5U) modification at position 34 in tRNAs. The polypeptide is tRNA uridine(34) hydroxylase (Streptococcus gordonii (strain Challis / ATCC 35105 / BCRC 15272 / CH1 / DL1 / V288)).